The primary structure comprises 274 residues: SPbeta prophage-derived uncharacterized protein YomD (274 aa).

This is SPbeta prophage-derived uncharacterized protein YomD (yomD) from Bacillus subtilis (strain 168).